Reading from the N-terminus, the 237-residue chain is Probable transcriptional regulatory protein EAT1b_0153 (237 aa).

This sequence belongs to the TACO1 family. YeeN subfamily.

It localises to the cytoplasm. The polypeptide is Probable transcriptional regulatory protein EAT1b_0153 (Exiguobacterium sp. (strain ATCC BAA-1283 / AT1b)).